Reading from the N-terminus, the 211-residue chain is Thioredoxin domain-containing protein 9 homolog (211 aa).

In terms of domain architecture, Thioredoxin spans 68 to 178; sequence YSEIHSEKDF…LEERIARAQV (111 aa). Residues 184–203 are compositionally biased toward polar residues; it reads ESSSLKPKSTTQVRRNVRQS. Residues 184–211 form a disordered region; it reads ESSSLKPKSTTQVRRNVRQSARSDSDSE.

This chain is Thioredoxin domain-containing protein 9 homolog, found in Arabidopsis thaliana (Mouse-ear cress).